A 471-amino-acid chain; its full sequence is Eukaryotic translation initiation factor 3 subunit L (471 aa).

One can recognise a PCI domain in the interval 252–446 (DAIRMFSHIL…DLDYAMQGDL (195 aa)).

It belongs to the eIF-3 subunit L family.

It is found in the cytoplasm. Its function is as follows. Component of the eukaryotic translation initiation factor 3 (eIF-3) complex, which is involved in protein synthesis of a specialized repertoire of mRNAs and, together with other initiation factors, stimulates binding of mRNA and methionyl-tRNAi to the 40S ribosome. The eIF-3 complex specifically targets and initiates translation of a subset of mRNAs involved in cell proliferation. This chain is Eukaryotic translation initiation factor 3 subunit L, found in Pyricularia oryzae (strain Y34) (Rice blast fungus).